Here is a 311-residue protein sequence, read N- to C-terminus: MIDLLIIAGPTAVGKTDISIKLAEKLNGEIISADSMQIYKYMDIGSAKITKDEMKGIPHHLIDVVEPHEEFNVSSFKDLAEKSIKDIWNRGKLPIIAGGTGLYINSLIYNYDFTDADRDEKYREYLTKLAEDKGNEYVHSLLKDIDEESYEKLYPNDLKRVVRALEVYKITGKSISEYIKENEKKLYDIPYNVNYFILNMNREVLYERINKRVDIMMGKGLIEEVKKLESMGYTPDMQSMKGIGYKEVLFYLNGDISLDEAIYLIKKGSRNYAKRQLTWFRKDKRSIWIDKDKYSSEEEIVDKIIKMVKDK.

9 to 16 (GPTAVGKT) serves as a coordination point for ATP. Substrate is bound at residue 11–16 (TAVGKT). The segment at 34-37 (DSMQ) is interaction with substrate tRNA.

Belongs to the IPP transferase family. Monomer. The cofactor is Mg(2+).

It catalyses the reaction adenosine(37) in tRNA + dimethylallyl diphosphate = N(6)-dimethylallyladenosine(37) in tRNA + diphosphate. Catalyzes the transfer of a dimethylallyl group onto the adenine at position 37 in tRNAs that read codons beginning with uridine, leading to the formation of N6-(dimethylallyl)adenosine (i(6)A). In Clostridium botulinum (strain Okra / Type B1), this protein is tRNA dimethylallyltransferase.